The following is a 447-amino-acid chain: Asparagine--tRNA ligase (447 aa).

The protein belongs to the class-II aminoacyl-tRNA synthetase family. Homodimer.

The protein resides in the cytoplasm. The enzyme catalyses tRNA(Asn) + L-asparagine + ATP = L-asparaginyl-tRNA(Asn) + AMP + diphosphate + H(+). This Lactococcus lactis subsp. lactis (strain IL1403) (Streptococcus lactis) protein is Asparagine--tRNA ligase.